A 557-amino-acid polypeptide reads, in one-letter code: 2-succinyl-5-enolpyruvyl-6-hydroxy-3-cyclohexene-1-carboxylate synthase (557 aa).

This sequence belongs to the TPP enzyme family. MenD subfamily. As to quaternary structure, homodimer. Requires Mg(2+) as cofactor. Mn(2+) serves as cofactor. The cofactor is thiamine diphosphate.

It catalyses the reaction isochorismate + 2-oxoglutarate + H(+) = 5-enolpyruvoyl-6-hydroxy-2-succinyl-cyclohex-3-ene-1-carboxylate + CO2. The protein operates within quinol/quinone metabolism; 1,4-dihydroxy-2-naphthoate biosynthesis; 1,4-dihydroxy-2-naphthoate from chorismate: step 2/7. It participates in quinol/quinone metabolism; menaquinone biosynthesis. Catalyzes the thiamine diphosphate-dependent decarboxylation of 2-oxoglutarate and the subsequent addition of the resulting succinic semialdehyde-thiamine pyrophosphate anion to isochorismate to yield 2-succinyl-5-enolpyruvyl-6-hydroxy-3-cyclohexene-1-carboxylate (SEPHCHC). The protein is 2-succinyl-5-enolpyruvyl-6-hydroxy-3-cyclohexene-1-carboxylate synthase of Staphylococcus aureus (strain bovine RF122 / ET3-1).